A 428-amino-acid chain; its full sequence is Enolase (428 aa).

Q163 provides a ligand contact to (2R)-2-phosphoglycerate. The active-site Proton donor is the E205. The Mg(2+) site is built by D242, E286, and D313. (2R)-2-phosphoglycerate is bound by residues K338, R367, S368, and K389. K338 (proton acceptor) is an active-site residue.

This sequence belongs to the enolase family. It depends on Mg(2+) as a cofactor.

It localises to the cytoplasm. The protein resides in the secreted. Its subcellular location is the cell surface. It catalyses the reaction (2R)-2-phosphoglycerate = phosphoenolpyruvate + H2O. It functions in the pathway carbohydrate degradation; glycolysis; pyruvate from D-glyceraldehyde 3-phosphate: step 4/5. Its function is as follows. Catalyzes the reversible conversion of 2-phosphoglycerate (2-PG) into phosphoenolpyruvate (PEP). It is essential for the degradation of carbohydrates via glycolysis. This chain is Enolase, found in Verminephrobacter eiseniae (strain EF01-2).